We begin with the raw amino-acid sequence, 359 residues long: MAKLPVEKMRELERRFGEIEARMSAGPAADVYVKLASEYSELQPVVTKIRVYEKAVTELADLETLLEDRSVDREMRDLAELELPEVKEQIEALEQEMQILLLPKDAADEKSAILEIRAGTGGSEAALFAGDLFRMYERFAAEKGWKVEVLSASEGEAGGYKEIIATITGKGVFAKLKFESGVHRVQRVPETEAGGRIHTSAATVAVLPEAEEIDIEIRAEDIRIDTMRSSGAGGQHVNTTDSAVRITHLPSGIVVTSSEKSQHQNRAKAMQVLRSRLYDAERQRADSERSADRKSQVGSGDRSERIRTYNFPQGRVTDHRINLTLYKLDRMMEGEIEEVVDALMADYQASQLAQLGEQQ.

N5-methylglutamine is present on glutamine 235. Residues 280-306 (AERQRADSERSADRKSQVGSGDRSERI) form a disordered region.

The protein belongs to the prokaryotic/mitochondrial release factor family. Methylated by PrmC. Methylation increases the termination efficiency of RF1.

It localises to the cytoplasm. Its function is as follows. Peptide chain release factor 1 directs the termination of translation in response to the peptide chain termination codons UAG and UAA. The chain is Peptide chain release factor 1 from Rhizobium johnstonii (strain DSM 114642 / LMG 32736 / 3841) (Rhizobium leguminosarum bv. viciae).